The chain runs to 201 residues: Cysteine dioxygenase type 1 (201 aa).

The Fe cation site is built by His-86, His-88, and His-141. The 3'-(S-cysteinyl)-tyrosine (Cys-Tyr) cross-link spans 93–158; it reads CFLKLLQGQL…TEPAVSLHLY (66 aa).

This sequence belongs to the cysteine dioxygenase family. In terms of assembly, monomer. Requires Fe cation as cofactor. Ni(2+) serves as cofactor. It depends on Zn(2+) as a cofactor. In terms of processing, the thioether cross-link between Cys-93 and Tyr-158 plays a structural role through stabilizing the Fe(2+) ion, and prevents the production of highly damaging free hydroxyl radicals by holding the oxygen radical via hydroxyl hydrogen.

The catalysed reaction is L-cysteine + O2 = 3-sulfino-L-alanine + H(+). It participates in organosulfur biosynthesis; taurine biosynthesis; hypotaurine from L-cysteine: step 1/2. Its function is as follows. Catalyzes the oxidation of cysteine to cysteine sulfinic acid with addition of molecular dioxygen. This Danio rerio (Zebrafish) protein is Cysteine dioxygenase type 1 (cdo1).